Consider the following 147-residue polypeptide: Deoxyuridine 5'-triphosphate nucleotidohydrolase (147 aa).

Arg24 contributes to the Mg(2+) binding site. Residues 68 to 70 (PRS), 82 to 85 (GVID), Tyr88, Gly93, Ile95, and Arg111 each bind dUTP.

The protein belongs to the dUTPase family. Mg(2+) is required as a cofactor.

The enzyme catalyses dUTP + H2O = dUMP + diphosphate + H(+). This enzyme is involved in nucleotide metabolism: it produces dUMP, the immediate precursor of thymidine nucleotides and it decreases the intracellular concentration of dUTP so that uracil cannot be incorporated into DNA. The protein is Deoxyuridine 5'-triphosphate nucleotidohydrolase (OPG046) of Camelus.